A 663-amino-acid chain; its full sequence is RING finger protein 145 (663 aa).

14 consecutive transmembrane segments (helical) span residues Tyr-53 to Pro-73, Leu-77 to Ser-97, Phe-123 to Thr-143, Ile-146 to Glu-166, Ile-168 to Gly-188, Leu-205 to Trp-222, Leu-225 to Ser-245, Tyr-275 to Cys-295, Thr-316 to Val-336, Phe-340 to Ile-360, Ser-384 to Phe-404, Leu-410 to Ile-430, Leu-460 to Gly-480, and Trp-482 to Ala-502. The YLYF motif motif lies at Tyr-81–Phe-84. The active site involves Cys-537. The RING-type; atypical zinc finger occupies Cys-537–His-575. Positions Leu-587–Ala-663 are disordered. Polar residues predominate over residues Gly-619–Asp-628.

Interacts (via YLYF motif) with INSIG1 and INSIG2.

The protein localises to the endoplasmic reticulum membrane. It carries out the reaction S-ubiquitinyl-[E2 ubiquitin-conjugating enzyme]-L-cysteine + [acceptor protein]-L-lysine = [E2 ubiquitin-conjugating enzyme]-L-cysteine + N(6)-ubiquitinyl-[acceptor protein]-L-lysine.. E3 ubiquitin ligase that catalyzes the direct transfer of ubiquitin from E2 ubiquitin-conjugating enzyme to a specific substrate. In response to bacterial infection, negatively regulates the phagocyte oxidative burst by controlling the turnover of the NADPH oxidase complex subunits. Promotes monoubiquitination of CYBA and 'Lys-48'-linked polyubiquitination and degradation of CYBB NADPH oxidase catalytic subunits, both essential for the generation of antimicrobial reactive oxygen species. Involved in the maintenance of cholesterol homeostasis. In response to high sterol concentrations ubiquitinates HMGCR, a rate-limiting enzyme in cholesterol biosynthesis, and targets it for degradation. The interaction with INSIG1 is required for this function. In addition, triggers ubiquitination of SCAP, likely inhibiting its transport to the Golgi apparatus and the subsequent processing/maturation of SREBPF2, ultimately down-regulating cholesterol biosynthesis. This is RING finger protein 145 from Mus musculus (Mouse).